The primary structure comprises 141 residues: ATP synthase epsilon chain (141 aa).

Belongs to the ATPase epsilon chain family. As to quaternary structure, F-type ATPases have 2 components, CF(1) - the catalytic core - and CF(0) - the membrane proton channel. CF(1) has five subunits: alpha(3), beta(3), gamma(1), delta(1), epsilon(1). CF(0) has three main subunits: a, b and c.

The protein localises to the cell inner membrane. Functionally, produces ATP from ADP in the presence of a proton gradient across the membrane. This chain is ATP synthase epsilon chain, found in Pseudomonas syringae pv. syringae (strain B728a).